Here is a 338-residue protein sequence, read N- to C-terminus: Phosphate acyltransferase (338 aa).

Belongs to the PlsX family. As to quaternary structure, homodimer. Probably interacts with PlsY.

The protein resides in the cytoplasm. The catalysed reaction is a fatty acyl-[ACP] + phosphate = an acyl phosphate + holo-[ACP]. It functions in the pathway lipid metabolism; phospholipid metabolism. Its function is as follows. Catalyzes the reversible formation of acyl-phosphate (acyl-PO(4)) from acyl-[acyl-carrier-protein] (acyl-ACP). This enzyme utilizes acyl-ACP as fatty acyl donor, but not acyl-CoA. The sequence is that of Phosphate acyltransferase from Alcanivorax borkumensis (strain ATCC 700651 / DSM 11573 / NCIMB 13689 / SK2).